Reading from the N-terminus, the 379-residue chain is Putative phosphatidate phosphatase (379 aa).

The interval 1-53 (MPAVKIIMSTETSASETTPLRRSENETPDHKELAQSNSNSRQTTVNSNNNNYS) is disordered. The span at 9–18 (STETSASETT) shows a compositional bias: polar residues. The segment covering 19-33 (PLRRSENETPDHKEL) has biased composition (basic and acidic residues). Positions 35-53 (QSNSNSRQTTVNSNNNNYS) are enriched in low complexity. The N-linked (GlcNAc...) asparagine glycan is linked to asparagine 51. A run of 2 helical transmembrane segments spans residues 90–110 (VGLD…FFLL) and 138–158 (MLYF…EVII). A glycan (N-linked (GlcNAc...) asparagine) is linked at asparagine 169. The next 2 membrane-spanning stretches (helical) occupy residues 266–286 (SFPS…ALYL) and 330–350 (AGSL…SDLF).

This sequence belongs to the PA-phosphatase related phosphoesterase family. Homodimer. This complex seems not to be involved in substrate recognition, it may confer only structural or functional stability. As to expression, expressed in embryonic gut in a pattern that guides germ cells towards mesoderm (initially in hindgut and then on lower side of gut). During extended germ band stage, expressed in ectoderm as a medial band throughout the trunk.

It localises to the membrane. The catalysed reaction is a 1,2-diacyl-sn-glycero-3-phosphate + H2O = a 1,2-diacyl-sn-glycerol + phosphate. In terms of biological role, responsible for guiding the germ cells early in the process of migration from the lumen of the developing gut towards the overlying mesoderm, where the germ cells enter the gonads. May be involved in lipid metabolism. The chain is Putative phosphatidate phosphatase (wun) from Drosophila melanogaster (Fruit fly).